Reading from the N-terminus, the 497-residue chain is Cytochrome P450 26A1 (497 aa).

A heme-binding site is contributed by C442.

The protein belongs to the cytochrome P450 family. It depends on heme as a cofactor. As to expression, expressed in most fetal and adult tissues with highest levels in adult liver, heart, pituitary gland, adrenal gland, placenta and regions of the brain. Expressed at high levels in lung, pancreas, skin and uterus (at protein level). Lower expression level is detected in spleen, kidney, intestine and adipose tissue (at protein level).

It localises to the endoplasmic reticulum membrane. It is found in the microsome membrane. It catalyses the reaction all-trans-retinoate + reduced [NADPH--hemoprotein reductase] + O2 = all-trans-(4S)-hydroxyretinoate + oxidized [NADPH--hemoprotein reductase] + H2O + H(+). It carries out the reaction all-trans-(4S)-hydroxyretinoate + reduced [NADPH--hemoprotein reductase] + O2 = all-trans-(4S,16)-dihydroxyretinoate + oxidized [NADPH--hemoprotein reductase] + H2O + H(+). The catalysed reaction is all-trans-retinoate + reduced [NADPH--hemoprotein reductase] + O2 = all-trans-18-hydroxyretinoate + oxidized [NADPH--hemoprotein reductase] + H2O + H(+). Its function is as follows. A cytochrome P450 monooxygenase involved in the metabolism of retinoates (RAs), the active metabolites of vitamin A, and critical signaling molecules in animals. RAs exist as at least four different isomers: all-trans-RA (atRA), 9-cis-RA, 13-cis-RA, and 9,13-dicis-RA, where atRA is considered to be the biologically active isomer, although 9-cis-RA and 13-cis-RA also have activity. Catalyzes the hydroxylation of atRA primarily at C-4 and C-18, thereby contributing to the regulation of atRA homeostasis and signaling. Hydroxylation of atRA limits its biological activity and initiates a degradative process leading to its eventual elimination. Involved in the convertion of atRA to all-trans-4-oxo-RA. Able to metabolize other RAs such as 9-cis, 13-cis and 9,13-di-cis RA. Can oxidize all-trans-13,14-dihydroretinoate (DRA) to metabolites which could include all-trans-4-oxo-DRA, all-trans-4-hydroxy-DRA, all-trans-5,8-epoxy-DRA, and all-trans-18-hydroxy-DRA. May play a role in the oxidative metabolism of xenobiotics such as tazarotenic acid. The polypeptide is Cytochrome P450 26A1 (Homo sapiens (Human)).